A 282-amino-acid chain; its full sequence is NADPH-dependent 7-cyano-7-deazaguanine reductase (282 aa).

88–90 serves as a coordination point for substrate; that stretch reads IES. 90-91 is a binding site for NADPH; it reads SK. Cys-190 (thioimide intermediate) is an active-site residue. Asp-197 functions as the Proton donor in the catalytic mechanism. Residue 229 to 230 participates in substrate binding; it reads HE. 258-259 provides a ligand contact to NADPH; the sequence is RG.

The protein belongs to the GTP cyclohydrolase I family. QueF type 2 subfamily. Homodimer.

The protein localises to the cytoplasm. It carries out the reaction 7-aminomethyl-7-carbaguanine + 2 NADP(+) = 7-cyano-7-deazaguanine + 2 NADPH + 3 H(+). Its pathway is tRNA modification; tRNA-queuosine biosynthesis. Catalyzes the NADPH-dependent reduction of 7-cyano-7-deazaguanine (preQ0) to 7-aminomethyl-7-deazaguanine (preQ1). The polypeptide is NADPH-dependent 7-cyano-7-deazaguanine reductase (Escherichia coli (strain K12 / MC4100 / BW2952)).